A 149-amino-acid chain; its full sequence is Large ribosomal subunit protein bL9 (149 aa).

Belongs to the bacterial ribosomal protein bL9 family.

Binds to the 23S rRNA. This Helicobacter pylori (strain ATCC 700392 / 26695) (Campylobacter pylori) protein is Large ribosomal subunit protein bL9.